Consider the following 216-residue polypeptide: MOB kinase activator 3B (216 aa).

Residues cysteine 82, cysteine 87, histidine 164, and histidine 169 each contribute to the Zn(2+) site.

Functionally, modulates LATS1 expression in the Hippo signaling pathway which plays a pivotal role in organ size control and tumor suppression by restricting proliferation and promoting apoptosis. This chain is MOB kinase activator 3B (Mob3b), found in Mus musculus (Mouse).